Here is a 46-residue protein sequence, read N- to C-terminus: Esculentin-1R (46 aa).

The cysteines at positions 40 and 46 are disulfide-linked.

As to expression, expressed by the skin glands.

Its subcellular location is the secreted. Shows antibacterial activity against representative Gram-negative and Gram-positive bacterial species, and hemolytic activity. In Pelophylax ridibundus (Marsh frog), this protein is Esculentin-1R.